Reading from the N-terminus, the 208-residue chain is UPF0637 protein BCQ_3749 (208 aa).

The protein belongs to the UPF0637 family.

The chain is UPF0637 protein BCQ_3749 from Bacillus cereus (strain Q1).